Reading from the N-terminus, the 622-residue chain is DNA mismatch repair protein MutL (622 aa).

Residues 399-414 (SSQNFHPDENDYRAEE) show a composition bias toward basic and acidic residues. Positions 399–422 (SSQNFHPDENDYRAEEASPAEENP) are disordered.

This sequence belongs to the DNA mismatch repair MutL/HexB family.

Functionally, this protein is involved in the repair of mismatches in DNA. It is required for dam-dependent methyl-directed DNA mismatch repair. May act as a 'molecular matchmaker', a protein that promotes the formation of a stable complex between two or more DNA-binding proteins in an ATP-dependent manner without itself being part of a final effector complex. This is DNA mismatch repair protein MutL from Phocaeicola vulgatus (strain ATCC 8482 / DSM 1447 / JCM 5826 / CCUG 4940 / NBRC 14291 / NCTC 11154) (Bacteroides vulgatus).